The following is a 255-amino-acid chain: Putative ankyrin repeat protein R880 (255 aa).

ANK repeat units lie at residues 79–109, 110–139, 141–169, 171–199, and 201–229; these read SGIN…DIHY, KTDY…NINT, DCYA…NVRK, RDLA…DVRS, and KNYA…NFRV.

The chain is Putative ankyrin repeat protein R880 from Acanthamoeba polyphaga (Amoeba).